The sequence spans 367 residues: Anhydro-N-acetylmuramic acid kinase (367 aa).

10-17 (GTSLDGVD) is a binding site for ATP.

This sequence belongs to the anhydro-N-acetylmuramic acid kinase family.

It carries out the reaction 1,6-anhydro-N-acetyl-beta-muramate + ATP + H2O = N-acetyl-D-muramate 6-phosphate + ADP + H(+). The protein operates within amino-sugar metabolism; 1,6-anhydro-N-acetylmuramate degradation. Its pathway is cell wall biogenesis; peptidoglycan recycling. In terms of biological role, catalyzes the specific phosphorylation of 1,6-anhydro-N-acetylmuramic acid (anhMurNAc) with the simultaneous cleavage of the 1,6-anhydro ring, generating MurNAc-6-P. Is required for the utilization of anhMurNAc either imported from the medium or derived from its own cell wall murein, and thus plays a role in cell wall recycling. This is Anhydro-N-acetylmuramic acid kinase from Aliivibrio fischeri (strain ATCC 700601 / ES114) (Vibrio fischeri).